The primary structure comprises 89 residues: Small ribosomal subunit protein uS15 (89 aa).

This sequence belongs to the universal ribosomal protein uS15 family. Part of the 30S ribosomal subunit. Forms a bridge to the 50S subunit in the 70S ribosome, contacting the 23S rRNA.

One of the primary rRNA binding proteins, it binds directly to 16S rRNA where it helps nucleate assembly of the platform of the 30S subunit by binding and bridging several RNA helices of the 16S rRNA. Its function is as follows. Forms an intersubunit bridge (bridge B4) with the 23S rRNA of the 50S subunit in the ribosome. The protein is Small ribosomal subunit protein uS15 of Methylococcus capsulatus (strain ATCC 33009 / NCIMB 11132 / Bath).